Consider the following 136-residue polypeptide: Nuclear receptor 2C2-associated protein (136 aa).

It belongs to the NR2C2AP family.

It is found in the nucleus. May act as a repressor of nr2c2-mediated transactivation by suppressing the binding between nr2c2 and its response element in target genes. The chain is Nuclear receptor 2C2-associated protein (nr2c2ap) from Xenopus tropicalis (Western clawed frog).